The sequence spans 581 residues: MFLVGSSSHTLHRLRILPLLLLLQTLERGLGRASPAGAPLEDVVIERYHIPRACPREVQMGDFVRYHYNGTFEDGKKFDSSYDRSTLVAIVVGVGRLITGMDRGLMGMCVNERRRLIVPPHLGYGSIGVAGLIPPDATLYFDVVLLDVWNKADTVQSTILLRPPYCPRMVQNSDFVRYHYNGTLLDGTAFDNSYSRGGTYDTYIGSGWLIKGMDQGLLGMCPGEKRKIIIPPFLAYGEKGYGTVIPPQASLVFYVLLLDVHNPKDTVQLETLELPQGCVRRAVAGDFMRYHYNGSLMDGTLFDSSYSRNHTYNTYVGQGYIIPGMDQGLQGACIGERRRITVPPHLAYGENGTGDKIPGSAVLIFDVHVIDFHNPSDPVEIKTLSRPPENCNETSKIGDFIRYHYNCSLLDGTRLFSSHDYEAPQEITLGANKVIEGLDRGLQGMCVGERRQLIVPPHLAHGENGARGVPGSAVLLFEVELVSREDGLPTGYLFVWYQDPSTSLFEDMDLNKDGEVPPEEFSSFIKAQVNEGKGRLMPGQDPDKTISDMFQNQDRNQDGKITAEELKLKSDEDQERVHEEL.

A signal peptide spans Met1 to Ala33. 3 PPIase FKBP-type domains span residues Gly61–Trp149, Ser173–His261, and Gly285–His373. Residues Asn69, Asn181, Asn293, Asn309, Asn351, Asn392, and Asn406 are each glycosylated (N-linked (GlcNAc...) asparagine). The PPIase FKBP-type 4 domain occupies Gly398–Glu485. EF-hand domains lie at Trp496–Glu531 and Asp541–Arg576. Positions 509, 511, 513, 515, 520, 554, 556, 558, 560, and 565 each coordinate Ca(2+). Residues Lys533–Leu581 form a disordered region. The segment covering Arg555–Leu581 has biased composition (basic and acidic residues). A Prevents secretion from ER motif is present at residues His578 to Leu581.

N-glycosylated. In terms of processing, phosphorylated. In terms of tissue distribution, expressed in aorta, brain, heart, kidney, lung, spleen and testis. Not detected in liver.

Its subcellular location is the endoplasmic reticulum lumen. The enzyme catalyses [protein]-peptidylproline (omega=180) = [protein]-peptidylproline (omega=0). With respect to regulation, inhibited by both FK506 and rapamycin, but not by cyclosporin A. In terms of biological role, PPIases accelerate the folding of proteins during protein synthesis. This chain is Peptidyl-prolyl cis-trans isomerase FKBP10 (Fkbp10), found in Mus musculus (Mouse).